A 363-amino-acid polypeptide reads, in one-letter code: 3-dehydroquinate synthase (363 aa).

NAD(+) is bound by residues 134-135, Lys-147, and Lys-156; that span reads TT. The Zn(2+) site is built by Glu-189, His-254, and His-271.

Belongs to the sugar phosphate cyclases superfamily. Dehydroquinate synthase family. It depends on Co(2+) as a cofactor. Zn(2+) serves as cofactor. The cofactor is NAD(+).

It is found in the cytoplasm. It catalyses the reaction 7-phospho-2-dehydro-3-deoxy-D-arabino-heptonate = 3-dehydroquinate + phosphate. It participates in metabolic intermediate biosynthesis; chorismate biosynthesis; chorismate from D-erythrose 4-phosphate and phosphoenolpyruvate: step 2/7. Its function is as follows. Catalyzes the conversion of 3-deoxy-D-arabino-heptulosonate 7-phosphate (DAHP) to dehydroquinate (DHQ). The sequence is that of 3-dehydroquinate synthase from Prochlorococcus marinus (strain MIT 9312).